Reading from the N-terminus, the 69-residue chain is Large ribosomal subunit protein uL29 (69 aa).

It belongs to the universal ribosomal protein uL29 family.

The sequence is that of Large ribosomal subunit protein uL29 from Thermoanaerobacter pseudethanolicus (strain ATCC 33223 / 39E) (Clostridium thermohydrosulfuricum).